The chain runs to 392 residues: Integrin-linked kinase-associated serine/threonine phosphatase 2C (392 aa).

Met1 is modified (N-acetylmethionine). The disordered stretch occupies residues 1 to 91; that stretch reads MDLFGDLPEP…PEEEKNGGEE (91 aa). Low complexity predominate over residues 31–40; that stretch reads DLPPTSSTDS. Residues 59–70 are compositionally biased toward polar residues; that stretch reads SGSLATSGSQVV. The span at 72–91 shows a compositional bias: basic and acidic residues; that stretch reads NEGKGAKRKAPEEEKNGGEE. The PPM-type phosphatase domain maps to 108 to 390; the sequence is KGYVAERKGE…DNVTVMVVRI (283 aa). Mn(2+) is bound by residues Asp152 and Gly153. The residue at position 210 (Lys210) is an N6-acetyllysine. The Mn(2+) site is built by Asp326 and Asp381.

The protein belongs to the PP2C family. In terms of assembly, interacts with ILK. Mg(2+) serves as cofactor. It depends on Mn(2+) as a cofactor. As to expression, widely expressed. Highest expression observed in kidney, liver and muscle.

Its subcellular location is the cytoplasm. It catalyses the reaction O-phospho-L-seryl-[protein] + H2O = L-seryl-[protein] + phosphate. It carries out the reaction O-phospho-L-threonyl-[protein] + H2O = L-threonyl-[protein] + phosphate. In terms of biological role, protein phosphatase that may play a role in regulation of cell cycle progression via dephosphorylation of its substrates whose appropriate phosphorylation states might be crucial for cell proliferation. Selectively associates with integrin linked kinase (ILK), to modulate cell adhesion and growth factor signaling. Inhibits the ILK-GSK3B signaling axis and may play an important role in inhibiting oncogenic transformation. The sequence is that of Integrin-linked kinase-associated serine/threonine phosphatase 2C (Ilkap) from Rattus norvegicus (Rat).